Consider the following 205-residue polypeptide: Small ribosomal subunit protein uS4 (205 aa).

Residues 17–46 (ENIWGRPKSPVNKREYGPGQHGQRRKGKLS) are disordered. Positions 94 to 157 (SRLDAVVYRA…KQLVIVLESV (64 aa)) constitute an S4 RNA-binding domain.

The protein belongs to the universal ribosomal protein uS4 family. Part of the 30S ribosomal subunit. Contacts protein S5. The interaction surface between S4 and S5 is involved in control of translational fidelity.

Its function is as follows. One of the primary rRNA binding proteins, it binds directly to 16S rRNA where it nucleates assembly of the body of the 30S subunit. Functionally, with S5 and S12 plays an important role in translational accuracy. This chain is Small ribosomal subunit protein uS4, found in Mesorhizobium japonicum (strain LMG 29417 / CECT 9101 / MAFF 303099) (Mesorhizobium loti (strain MAFF 303099)).